Reading from the N-terminus, the 101-residue chain is Small ribosomal subunit protein bS18c (101 aa).

Over residues 1-19 (MDKSKRPFRKSKRSFRKRL) the composition is skewed to basic residues. The tract at residues 1–23 (MDKSKRPFRKSKRSFRKRLPPIG) is disordered.

This sequence belongs to the bacterial ribosomal protein bS18 family. In terms of assembly, part of the 30S ribosomal subunit.

The protein resides in the plastid. The protein localises to the chloroplast. The chain is Small ribosomal subunit protein bS18c from Chloranthus spicatus (Chulantree).